Consider the following 103-residue polypeptide: Integration host factor subunit beta (103 aa).

A disordered region spans residues 62 to 81 (RNPKTGESVALPGKHVPHFK).

It belongs to the bacterial histone-like protein family. As to quaternary structure, heterodimer of an alpha and a beta chain.

Functionally, this protein is one of the two subunits of integration host factor, a specific DNA-binding protein that functions in genetic recombination as well as in transcriptional and translational control. This is Integration host factor subunit beta from Xanthomonas axonopodis pv. citri (strain 306).